The sequence spans 125 residues: Glycine cleavage system H protein (125 aa).

The region spanning 23-105 is the Lipoyl-binding domain; it reads VSTVGITEHA…FEGGWLFKVR (83 aa). K64 bears the N6-lipoyllysine mark.

The protein belongs to the GcvH family. As to quaternary structure, the glycine cleavage system is composed of four proteins: P, T, L and H. (R)-lipoate is required as a cofactor.

In terms of biological role, the glycine cleavage system catalyzes the degradation of glycine. The H protein shuttles the methylamine group of glycine from the P protein to the T protein. This chain is Glycine cleavage system H protein, found in Streptomyces coelicolor (strain ATCC BAA-471 / A3(2) / M145).